A 363-amino-acid polypeptide reads, in one-letter code: MSGIPGLAGMSSMSPYSAYAALTQHTGVSSGSSPFGSQYCSSVNDFNPYSDPRGSNTWYGMAASANASNDPRMTMSRLMGSAAAAASSSMSAYSGIPTNFHQGMHSAMGMASLGAATYDHQKAAMQFNNMSQRRKRRILFSQAQIYELERRFKQQKYLSAPEREHLANLINLTPTQVKIWFQNHRYKCKRSQKDKEKEQQKEKSYHLKKNIVDDKERSPNKQICNASSSDRSTPEEPVAKAKESGLDFSNHKIDNLNLKMEADLEPKSSLYSIIPPYLTNSYAQQTQSEAQTSPIINNVLGSNLFPERKSTPTMGPLTSYSFGQSMDSISSFYSPDFSLYNCAHPYMAASSSYFMNAASRPWN.

The segment at residues 133 to 192 (RRKRRILFSQAQIYELERRFKQQKYLSAPEREHLANLINLTPTQVKIWFQNHRYKCKRSQ) is a DNA-binding region (homeobox). Positions 189-246 (KRSQKDKEKEQQKEKSYHLKKNIVDDKERSPNKQICNASSSDRSTPEEPVAKAKESGL) are disordered. Over residues 191 to 219 (SQKDKEKEQQKEKSYHLKKNIVDDKERSP) the composition is skewed to basic and acidic residues. Positions 220–231 (NKQICNASSSDR) are enriched in polar residues. Positions 232 to 246 (STPEEPVAKAKESGL) are enriched in basic and acidic residues.

The protein belongs to the NK-2 homeobox family. In terms of tissue distribution, intestine and unidentified peripheral parenchymal cells. Slightly higher levels in the cephalic region compared to other body regions.

The protein resides in the nucleus. This protein might be involved in determination and/or differentiation of nerve cells in the continuous replacement of neurons in the cephalic region. This is Homeobox protein DTH-2 (DTH-2) from Girardia tigrina (Planarian).